A 142-amino-acid polypeptide reads, in one-letter code: Putative pre-16S rRNA nuclease (142 aa).

This sequence belongs to the YqgF nuclease family.

The protein localises to the cytoplasm. In terms of biological role, could be a nuclease involved in processing of the 5'-end of pre-16S rRNA. This is Putative pre-16S rRNA nuclease from Nitratidesulfovibrio vulgaris (strain DSM 19637 / Miyazaki F) (Desulfovibrio vulgaris).